The chain runs to 229 residues: Stage III sporulation protein AG (229 aa).

The chain crosses the membrane as a helical span at residues 30–50; sequence YHYFLFVFVLGVSFMLVSQLF. Disordered stretches follow at residues 64 to 93 and 136 to 159; these read AVSSQHSADSKEKTAEVFKASKSDKPKDSI and SNKNTTTEETDKEGGKRSVTDQSS. A compositionally biased stretch (basic and acidic residues) spans 71–93; sequence ADSKEKTAEVFKASKSDKPKDSI.

The protein resides in the cell membrane. The polypeptide is Stage III sporulation protein AG (spoIIIAG) (Bacillus subtilis (strain 168)).